The sequence spans 206 residues: BAG family molecular chaperone regulator 1B (206 aa).

The region spanning 122–202 (IEAYIDELQQ…QYLSKLDSTK (81 aa)) is the BAG domain. Position 144 is a phosphoserine (S144).

In terms of assembly, binds to the ATPase domain of HSP70/HSC chaperones.

Its function is as follows. Inhibits the chaperone activity of HSP70/HSC70 by promoting substrate release. The sequence is that of BAG family molecular chaperone regulator 1B (bag102) from Schizosaccharomyces pombe (strain 972 / ATCC 24843) (Fission yeast).